We begin with the raw amino-acid sequence, 142 residues long: Transcription antitermination protein NusB (142 aa).

Belongs to the NusB family.

Involved in transcription antitermination. Required for transcription of ribosomal RNA (rRNA) genes. Binds specifically to the boxA antiterminator sequence of the ribosomal RNA (rrn) operons. This chain is Transcription antitermination protein NusB, found in Trichlorobacter lovleyi (strain ATCC BAA-1151 / DSM 17278 / SZ) (Geobacter lovleyi).